The following is a 336-amino-acid chain: Glycerol-3-phosphate dehydrogenase [NAD(P)+] (336 aa).

4 residues coordinate NADPH: S13, W14, R34, and K108. Sn-glycerol 3-phosphate-binding residues include K108, G138, and S140. A142 is a binding site for NADPH. K193, D246, S256, R257, and N258 together coordinate sn-glycerol 3-phosphate. The active-site Proton acceptor is the K193. R257 serves as a coordination point for NADPH. 2 residues coordinate NADPH: V281 and E283.

It belongs to the NAD-dependent glycerol-3-phosphate dehydrogenase family.

The protein localises to the cytoplasm. The catalysed reaction is sn-glycerol 3-phosphate + NAD(+) = dihydroxyacetone phosphate + NADH + H(+). It catalyses the reaction sn-glycerol 3-phosphate + NADP(+) = dihydroxyacetone phosphate + NADPH + H(+). The protein operates within membrane lipid metabolism; glycerophospholipid metabolism. Functionally, catalyzes the reduction of the glycolytic intermediate dihydroxyacetone phosphate (DHAP) to sn-glycerol 3-phosphate (G3P), the key precursor for phospholipid synthesis. This chain is Glycerol-3-phosphate dehydrogenase [NAD(P)+], found in Carboxydothermus hydrogenoformans (strain ATCC BAA-161 / DSM 6008 / Z-2901).